We begin with the raw amino-acid sequence, 673 residues long: B3 domain-containing protein Os01g0905400 (673 aa).

Residues 1–34 (MVELIKVPKIEQEEGNADSHGKEKADVVHEEKTE) show a composition bias toward basic and acidic residues. Positions 1-44 (MVELIKVPKIEQEEGNADSHGKEKADVVHEEKTEKVKRRRKRVS) are disordered. Positions 79-172 (LPSFFKIMVG…VFTVQIFAIS (94 aa)) form a DNA-binding region, TF-B3 1. The interval 315–337 (PSFSYPESSNVMTADKESERSHQ) is disordered. The span at 328–337 (ADKESERSHQ) shows a compositional bias: basic and acidic residues. The segment at residues 576–671 (SKKFCITIPP…ELSFQVLVPN (96 aa)) is a DNA-binding region (TF-B3 2).

It is found in the nucleus. The protein is B3 domain-containing protein Os01g0905400 of Oryza sativa subsp. japonica (Rice).